The chain runs to 41 residues: Photosystem I reaction center subunit IX (41 aa).

The helical transmembrane segment at 7–27 threads the bilayer; sequence YLSTAPVIALAWMSFTAGLLI.

This sequence belongs to the PsaJ family.

The protein localises to the plastid. It localises to the chloroplast thylakoid membrane. May help in the organization of the PsaE and PsaF subunits. This chain is Photosystem I reaction center subunit IX, found in Tupiella akineta (Green alga).